The chain runs to 93 residues: UPF0147 protein PH1921.2 (93 aa).

Belongs to the UPF0147 family.

The polypeptide is UPF0147 protein PH1921.2 (Pyrococcus horikoshii (strain ATCC 700860 / DSM 12428 / JCM 9974 / NBRC 100139 / OT-3)).